Here is a 343-residue protein sequence, read N- to C-terminus: Uroporphyrinogen decarboxylase (343 aa).

Residues 26–30, aspartate 75, tyrosine 150, serine 205, and histidine 319 each bind substrate; that span reads RQAGR.

Belongs to the uroporphyrinogen decarboxylase family. As to quaternary structure, homodimer.

The protein resides in the cytoplasm. It carries out the reaction uroporphyrinogen III + 4 H(+) = coproporphyrinogen III + 4 CO2. Its pathway is porphyrin-containing compound metabolism; protoporphyrin-IX biosynthesis; coproporphyrinogen-III from 5-aminolevulinate: step 4/4. In terms of biological role, catalyzes the decarboxylation of four acetate groups of uroporphyrinogen-III to yield coproporphyrinogen-III. The protein is Uroporphyrinogen decarboxylase of Syntrophotalea carbinolica (strain DSM 2380 / NBRC 103641 / GraBd1) (Pelobacter carbinolicus).